Reading from the N-terminus, the 395-residue chain is HCLS1-binding protein 3 (395 aa).

Position 1 is an N-acetylmethionine (M1). S3 is modified (phosphoserine). Residues 19–142 (GLDLSVPQHQ…EFLGTRAPGA (124 aa)) enclose the PX domain. Disordered stretches follow at residues 143–310 (TGLA…KELF) and 322–374 (LGSE…AMDE). Acidic residues predominate over residues 162 to 174 (DSDEAFDFFEQQD). The residue at position 191 (S191) is a Phosphoserine. Residues 194 to 206 (GEEEEEEEEEEVL) show a composition bias toward acidic residues. 2 stretches are compositionally biased toward basic and acidic residues: residues 249–260 (SDKKVSETRRPL) and 299–310 (RPEHGDASKELF). Phosphoserine is present on S254. Over residues 329–339 (KPQTKPKPLVP) the composition is skewed to pro residues. An N6-acetyllysine modification is found at K341.

As to quaternary structure, binds HCLS1. Interacts with the SH3 domain of HCLS1 in vitro. Ubiquitously expressed.

Its function is as follows. May be a modulator of IL-2 signaling. This is HCLS1-binding protein 3 (Hs1bp3) from Mus musculus (Mouse).